We begin with the raw amino-acid sequence, 325 residues long: Secreted frizzled-related protein 3 (325 aa).

Positions 1–32 (MVCGSPGGMLLLRAGLLALAALCLLRVPGARA) are cleaved as a signal peptide. Residues 33–150 (AACEPVRIPL…VYDRGVCISP (118 aa)) enclose the FZ domain. Disulfide bonds link Cys35-Cys96, Cys43-Cys89, Cys80-Cys119, Cys108-Cys147, and Cys112-Cys136. Asn49 is a glycosylation site (N-linked (GlcNAc...) asparagine). An NTR domain is found at 178 to 298 (CKCKPIRATQ…WDMKLRHLGL (121 aa)). A disordered region spans residues 297–325 (GLSKSDSSNSDSTQSQKSGRNSNPRQARN). Over residues 299–314 (SKSDSSNSDSTQSQKS) the composition is skewed to low complexity. The span at 315–325 (GRNSNPRQARN) shows a compositional bias: polar residues.

The protein belongs to the secreted frizzled-related protein (sFRP) family. Interacts with MYOC. As to expression, expressed primarily in the cartilaginous cores of the long bone during embryonic and fetal development and in the appendicular skeleton (6-13 weeks). At 13 weeks of gestation, transcripts were present in early chondroblasts of the tarsal bones of the foot, the carpal bones of the hands and the epiphysis of long bones. Highly expressed in placenta and heart, followed by brain, skeletal muscle, kidney and pancreas. Weakly expressed in lung and liver.

Its subcellular location is the secreted. In terms of biological role, soluble frizzled-related proteins (sFRPS) function as modulators of Wnt signaling through direct interaction with Wnts. They have a role in regulating cell growth and differentiation in specific cell types. SFRP3/FRZB appears to be involved in limb skeletogenesis. Antagonist of Wnt8 signaling. Regulates chondrocyte maturation and long bone development. The polypeptide is Secreted frizzled-related protein 3 (FRZB) (Homo sapiens (Human)).